A 909-amino-acid chain; its full sequence is Ribosome-releasing factor 2, mitochondrial (909 aa).

A mitochondrion-targeting transit peptide spans 1–15 (MVAAPLLRAHQAARL). The tr-type G domain maps to 57 to 367 (DRTRNIGIIA…AVTNLLPSPP (311 aa)). GTP is bound at residue 66 to 73 (AHIDAGKT). The tract at residues 121–148 (WPPQTAGDGNTTPQEPQTPRSASSHTVN) is disordered. The segment covering 127–148 (GDGNTTPQEPQTPRSASSHTVN) has biased composition (polar residues). GTP contacts are provided by residues 151-155 (DTPGH) and 205-208 (NKLD).

It belongs to the TRAFAC class translation factor GTPase superfamily. Classic translation factor GTPase family. EF-G/EF-2 subfamily.

It localises to the mitochondrion. Functionally, mitochondrial GTPase that mediates the disassembly of ribosomes from messenger RNA at the termination of mitochondrial protein biosynthesis. Not involved in the GTP-dependent ribosomal translocation step during translation elongation. The polypeptide is Ribosome-releasing factor 2, mitochondrial (mef2) (Aspergillus flavus (strain ATCC 200026 / FGSC A1120 / IAM 13836 / NRRL 3357 / JCM 12722 / SRRC 167)).